The chain runs to 224 residues: GrpE protein homolog 2, mitochondrial (224 aa).

The transit peptide at 1–31 (MAARSLWAVQRLQRLLASGAMSESRGWLHPF) directs the protein to the mitochondrion. K141 carries the N6-acetyllysine modification.

The protein belongs to the GrpE family. As to quaternary structure, probable component of the PAM complex at least composed of a mitochondrial HSP70 protein, GRPEL1 or GRPEL2, TIMM44, TIMM16/PAM16 and TIMM14/DNAJC19. In terms of tissue distribution, ubiquitous.

The protein localises to the mitochondrion matrix. Its function is as follows. Essential component of the PAM complex, a complex required for the translocation of transit peptide-containing proteins from the inner membrane into the mitochondrial matrix in an ATP-dependent manner. Seems to control the nucleotide-dependent binding of mitochondrial HSP70 to substrate proteins. Stimulates ATPase activity of mt-HSP70. May also serve to modulate the interconversion of oligomeric (inactive) and monomeric (active) forms of mt-HSP70. This is GrpE protein homolog 2, mitochondrial (Grpel2) from Mus musculus (Mouse).